The sequence spans 170 residues: Cytochrome P450 monooxygenase oryQ (170 aa).

Cys-85 is a heme binding site.

The protein belongs to the cytochrome P450 family. Requires heme as cofactor.

Its pathway is secondary metabolite biosynthesis. Cytochrome P450 monooxygenase; part of the gene cluster that mediates the biosynthesis of oryzines, natural products with an unusual maleidride backbone. The two subunits of the fungal fatty acid synthase oryfasA and oryfasB probably form octenoic acid. This fatty acid is most likely activated by the acyl-CoA ligase oryP to give octenyl-CoA before the citrate synthase-like protein oryE catalyzes condensation with oxaloacetate to form tricarboxylic acid. The next steps of the pathways are conjectural, but a favorite possible route has been proposed, beginning with decarboxylation and concomitant dehydration by the decarboxylase oryM, followed by tautomerization, which may lead to the production of a diene intermediate. Reduction of this diene intermediate could give the known metabolite piliformic acid. On the pathway to oryzine B and oryzine A, however, hydroxylation of the diene by the alpha-ketoglutarate-dependent dioxygenase oryG and lactonisation by the lactonohydrolases oryH or oryL could give oryzine B directly. Finally, enoyl reduction by the dehydrogenase oryD would then convert oryzine B into oryzine A. The sequence is that of Cytochrome P450 monooxygenase oryQ from Aspergillus oryzae (strain ATCC 42149 / RIB 40) (Yellow koji mold).